Here is a 170-residue protein sequence, read N- to C-terminus: Putative invertase inhibitor (170 aa).

The first 14 residues, 1-14 (MKLSFSLCIFFLIS), serve as a signal peptide directing secretion. 2 disulfides stabilise this stretch: C22–C37 and C93–C133.

This sequence belongs to the PMEI family. As to expression, expressed in pollen (at protein level). Expressed in pollen.

The chain is Putative invertase inhibitor from Platanus orientalis (Oriental plane-tree).